We begin with the raw amino-acid sequence, 451 residues long: Tubulin alpha-1 chain (451 aa).

Position 11 (Gln11) interacts with GTP. The residue at position 40 (Lys40) is an N6-acetyllysine. GTP-binding residues include Glu71, Gly144, Thr145, Thr179, Asn206, and Asn228. Residue Glu71 coordinates Mg(2+). Glu254 is an active-site residue.

This sequence belongs to the tubulin family. In terms of assembly, dimer of alpha and beta chains. A typical microtubule is a hollow water-filled tube with an outer diameter of 25 nm and an inner diameter of 15 nM. Alpha-beta heterodimers associate head-to-tail to form protofilaments running lengthwise along the microtubule wall with the beta-tubulin subunit facing the microtubule plus end conferring a structural polarity. Microtubules usually have 13 protofilaments but different protofilament numbers can be found in some organisms and specialized cells. It depends on Mg(2+) as a cofactor. Post-translationally, undergoes a tyrosination/detyrosination cycle, the cyclic removal and re-addition of a C-terminal tyrosine residue by the enzymes tubulin tyrosine carboxypeptidase (TTCP) and tubulin tyrosine ligase (TTL), respectively. In terms of processing, acetylation of alpha chains at Lys-40 stabilizes microtubules and affects affinity and processivity of microtubule motors. This modification has a role in multiple cellular functions, ranging from cell motility, cell cycle progression or cell differentiation to intracellular trafficking and signaling.

It is found in the cytoplasm. The protein resides in the cytoskeleton. The catalysed reaction is GTP + H2O = GDP + phosphate + H(+). Functionally, tubulin is the major constituent of microtubules, a cylinder consisting of laterally associated linear protofilaments composed of alpha- and beta-tubulin heterodimers. Microtubules grow by the addition of GTP-tubulin dimers to the microtubule end, where a stabilizing cap forms. Below the cap, tubulin dimers are in GDP-bound state, owing to GTPase activity of alpha-tubulin. This chain is Tubulin alpha-1 chain (TUBA1), found in Eleusine indica (Goosegrass).